A 254-amino-acid chain; its full sequence is Triosephosphate isomerase (254 aa).

Position 9 to 11 (9 to 11) interacts with substrate; the sequence is NWK. The active-site Electrophile is His-95. Glu-167 functions as the Proton acceptor in the catalytic mechanism. Substrate-binding positions include Gly-173, Ser-213, and 234–235; that span reads GG.

This sequence belongs to the triosephosphate isomerase family. In terms of assembly, homodimer.

The protein localises to the cytoplasm. It catalyses the reaction D-glyceraldehyde 3-phosphate = dihydroxyacetone phosphate. It functions in the pathway carbohydrate biosynthesis; gluconeogenesis. The protein operates within carbohydrate degradation; glycolysis; D-glyceraldehyde 3-phosphate from glycerone phosphate: step 1/1. Its function is as follows. Involved in the gluconeogenesis. Catalyzes stereospecifically the conversion of dihydroxyacetone phosphate (DHAP) to D-glyceraldehyde-3-phosphate (G3P). The chain is Triosephosphate isomerase from Roseiflexus castenholzii (strain DSM 13941 / HLO8).